Consider the following 305-residue polypeptide: Aspartate carbamoyltransferase catalytic subunit (305 aa).

Positions 51 and 52 each coordinate carbamoyl phosphate. Lysine 79 provides a ligand contact to L-aspartate. The carbamoyl phosphate site is built by arginine 101, histidine 130, and glutamine 133. L-aspartate-binding residues include arginine 163 and arginine 215. Positions 256 and 257 each coordinate carbamoyl phosphate.

The protein belongs to the aspartate/ornithine carbamoyltransferase superfamily. ATCase family. As to quaternary structure, heterododecamer (2C3:3R2) of six catalytic PyrB chains organized as two trimers (C3), and six regulatory PyrI chains organized as three dimers (R2).

The enzyme catalyses carbamoyl phosphate + L-aspartate = N-carbamoyl-L-aspartate + phosphate + H(+). It participates in pyrimidine metabolism; UMP biosynthesis via de novo pathway; (S)-dihydroorotate from bicarbonate: step 2/3. Catalyzes the condensation of carbamoyl phosphate and aspartate to form carbamoyl aspartate and inorganic phosphate, the committed step in the de novo pyrimidine nucleotide biosynthesis pathway. The protein is Aspartate carbamoyltransferase catalytic subunit of Ehrlichia canis (strain Jake).